Here is a 466-residue protein sequence, read N- to C-terminus: Polycomb group protein FIE1 (466 aa).

Basic residues predominate over residues 1–10; the sequence is MGPTSRNHKS. The disordered stretch occupies residues 1 to 71; it reads MGPTSRNHKS…GEGEPQETVL (71 aa). Over residues 31–49 the composition is skewed to low complexity; that stretch reads SITASASASAFASPAVANS. WD repeat units follow at residues 167-209, 212-252, 258-298, 324-361, 374-414, and 421-460; these read DMNE…IYKS, GHGG…LILV, GHRH…EYVE, IHSN…ENPG, PECN…PVLI, and QVKS…TAPV.

This sequence belongs to the WD repeat ESC family. As to quaternary structure, interacts with EZ1 and CLF. Component of the polycomb repressive complex 2 (PRC2), which methylates 'Lys-27' residues of histone H3 (H3K27me3), leading to transcriptional repression of the affected target gene. In terms of tissue distribution, expressed specifically in seed endosperm.

Polycomb group (PcG) protein. PcG proteins act by forming multiprotein complexes, which are required to maintain the transcriptionally repressive state of homeotic genes throughout development. PcG proteins are not required to initiate repression, but to maintain it during later stages of development. They act via the methylation of histones, rendering chromatin heritably changed in its expressibility. Together with EZ1 and CLF forms a complex that is involved in gene transcriptional repression by trimethylation on histone H3 'Lys-27' (H3K27me3) of target genes. Involved in the regulation of embryo and seed endosperm development. FIE1-containing PcG complex in seed endosperm regulates the expression of various transcription factors by trimethylation on histone H3 'Lys-27' (H3K27me3) of target genes. Involved in the overall expression regulation of nutrient metabolism genes, such as prolamin synthesis and seed storage protein synthesis genes. Can regulate valine, leucine and isoleucine metabolism-related genes. The sequence is that of Polycomb group protein FIE1 from Oryza sativa subsp. japonica (Rice).